The following is a 487-amino-acid chain: Protein nucleotidyltransferase YdiU (487 aa).

Residues G90, G92, R93, K113, D125, G126, R176, and R183 each coordinate ATP. The active-site Proton acceptor is D252. N253 and D262 together coordinate Mg(2+). D262 serves as a coordination point for ATP.

Belongs to the SELO family. It depends on Mg(2+) as a cofactor. Mn(2+) serves as cofactor.

It catalyses the reaction L-seryl-[protein] + ATP = 3-O-(5'-adenylyl)-L-seryl-[protein] + diphosphate. It carries out the reaction L-threonyl-[protein] + ATP = 3-O-(5'-adenylyl)-L-threonyl-[protein] + diphosphate. The enzyme catalyses L-tyrosyl-[protein] + ATP = O-(5'-adenylyl)-L-tyrosyl-[protein] + diphosphate. The catalysed reaction is L-histidyl-[protein] + UTP = N(tele)-(5'-uridylyl)-L-histidyl-[protein] + diphosphate. It catalyses the reaction L-seryl-[protein] + UTP = O-(5'-uridylyl)-L-seryl-[protein] + diphosphate. It carries out the reaction L-tyrosyl-[protein] + UTP = O-(5'-uridylyl)-L-tyrosyl-[protein] + diphosphate. Nucleotidyltransferase involved in the post-translational modification of proteins. It can catalyze the addition of adenosine monophosphate (AMP) or uridine monophosphate (UMP) to a protein, resulting in modifications known as AMPylation and UMPylation. The sequence is that of Protein nucleotidyltransferase YdiU from Pseudomonas fluorescens (strain ATCC BAA-477 / NRRL B-23932 / Pf-5).